Consider the following 227-residue polypeptide: UPF0173 metal-dependent hydrolase BCQ_4418 (227 aa).

It belongs to the UPF0173 family.

This is UPF0173 metal-dependent hydrolase BCQ_4418 from Bacillus cereus (strain Q1).